We begin with the raw amino-acid sequence, 98 residues long: Large ribosomal subunit protein uL23 (98 aa).

The protein belongs to the universal ribosomal protein uL23 family. Part of the 50S ribosomal subunit. Contacts protein L29, and trigger factor when it is bound to the ribosome.

One of the early assembly proteins it binds 23S rRNA. One of the proteins that surrounds the polypeptide exit tunnel on the outside of the ribosome. Forms the main docking site for trigger factor binding to the ribosome. This Rickettsia bellii (strain OSU 85-389) protein is Large ribosomal subunit protein uL23.